The primary structure comprises 235 residues: Ion-translocating oxidoreductase complex subunit E (235 aa).

The next 5 membrane-spanning stretches (helical) occupy residues 63–83 (LGLG…ISLF), 93–113 (IPIY…LMNA), 117–137 (TLYQ…IIIG), 152–172 (IWDG…LGAL), and 206–226 (SFLL…LLAI).

This sequence belongs to the NqrDE/RnfAE family. As to quaternary structure, the complex is composed of six subunits: RnfA, RnfB, RnfC, RnfD, RnfE and RnfG.

Its subcellular location is the cell inner membrane. Its function is as follows. Part of a membrane-bound complex that couples electron transfer with translocation of ions across the membrane. The protein is Ion-translocating oxidoreductase complex subunit E of Haemophilus influenzae (strain 86-028NP).